Here is a 126-residue protein sequence, read N- to C-terminus: Large ribosomal subunit protein bL12c (126 aa).

The protein belongs to the bacterial ribosomal protein bL12 family. In terms of assembly, homodimer. Part of the ribosomal stalk of the 50S ribosomal subunit. Forms a multimeric L10(L12)X complex, where L10 forms an elongated spine to which 2 to 4 L12 dimers bind in a sequential fashion. Binds GTP-bound translation factors.

The protein resides in the plastid. It is found in the cyanelle. In terms of biological role, forms part of the ribosomal stalk which helps the ribosome interact with GTP-bound translation factors. Is thus essential for accurate translation. The protein is Large ribosomal subunit protein bL12c of Cyanophora paradoxa.